Consider the following 185-residue polypeptide: Ribosome-recycling factor (185 aa).

It belongs to the RRF family.

Its subcellular location is the cytoplasm. Responsible for the release of ribosomes from messenger RNA at the termination of protein biosynthesis. May increase the efficiency of translation by recycling ribosomes from one round of translation to another. The polypeptide is Ribosome-recycling factor (Francisella tularensis subsp. holarctica (strain FTNF002-00 / FTA)).